The sequence spans 103 residues: Large ribosomal subunit protein bL21 (103 aa).

The protein belongs to the bacterial ribosomal protein bL21 family. As to quaternary structure, part of the 50S ribosomal subunit. Contacts protein L20.

This protein binds to 23S rRNA in the presence of protein L20. In Acidovorax sp. (strain JS42), this protein is Large ribosomal subunit protein bL21.